The primary structure comprises 185 residues: ATP-dependent protease subunit HslV (185 aa).

Residue threonine 12 is part of the active site. Positions 168, 171, and 174 each coordinate Na(+).

It belongs to the peptidase T1B family. HslV subfamily. In terms of assembly, a double ring-shaped homohexamer of HslV is capped on each side by a ring-shaped HslU homohexamer. The assembly of the HslU/HslV complex is dependent on binding of ATP.

It localises to the cytoplasm. The catalysed reaction is ATP-dependent cleavage of peptide bonds with broad specificity.. Allosterically activated by HslU binding. Functionally, protease subunit of a proteasome-like degradation complex believed to be a general protein degrading machinery. In Cereibacter sphaeroides (strain ATCC 17023 / DSM 158 / JCM 6121 / CCUG 31486 / LMG 2827 / NBRC 12203 / NCIMB 8253 / ATH 2.4.1.) (Rhodobacter sphaeroides), this protein is ATP-dependent protease subunit HslV.